The chain runs to 1165 residues: TBC1 domain family member 1 (1165 aa).

Residue serine 146 is modified to Phosphoserine. The interval 207 to 234 (FSSDQSRSALQPPGDGERGPRPMRKSFS) is disordered. The residue at position 232 (serine 232) is a Phosphoserine; by PKB/AKT1. Serine 234 carries the phosphoserine; by AMPK modification. Residues 243–401 (FRKEFQDAGL…LHKLCERIEG (159 aa)) form the PID domain. Serine 500 carries the post-translational modification Phosphoserine. The residue at position 502 (threonine 502) is a Phosphothreonine; by PKB/AKT1. Phosphoserine occurs at positions 504, 522, 524, 562, 563, 567, 568, and 582. At threonine 593 the chain carries Phosphothreonine. A Phosphoserine modification is found at serine 611. The residue at position 624 (serine 624) is a Phosphoserine; by PKB/AKT1. The segment at 624-651 (SVSTETPHERKDFESKADHISDASRTPV) is disordered. A compositionally biased stretch (basic and acidic residues) spans 629–645 (TPHERKDFESKADHISD). Phosphoserine is present on residues serine 692 and serine 938. In terms of domain architecture, Rab-GAP TBC spans 797 to 991 (GVPRHHRGEI…RVFDMIFLQG (195 aa)). Tyrosine 949 carries the phosphotyrosine modification. The segment at 1146–1165 (QTAELGSQESDPTLPKPSGD) is disordered.

Interacts with APPL2 (via BAR domain); interaction is dependent of TBC1D1 phosphorylation at Ser-232; interaction diminishes the phosphorylation of TBC1D1 at Thr-593, resulting in inhibition of SLC2A4/GLUT4 translocation and glucose uptake. Insulin-stimulated phosphorylation by AKT family kinases stimulates SLC2A4/GLUT4 translocation.

The protein localises to the nucleus. May act as a GTPase-activating protein for Rab family protein(s). May play a role in the cell cycle and differentiation of various tissues. Involved in the trafficking and translocation of GLUT4-containing vesicles and insulin-stimulated glucose uptake into cells. The polypeptide is TBC1 domain family member 1 (TBC1D1) (Bos taurus (Bovine)).